Reading from the N-terminus, the 335-residue chain is Glycerol-3-phosphate dehydrogenase [NAD(P)+] (335 aa).

NADPH contacts are provided by Ser12, Trp13, His33, Arg34, and Lys108. Positions 108, 137, and 139 each coordinate sn-glycerol 3-phosphate. Residue Ala141 coordinates NADPH. Sn-glycerol 3-phosphate contacts are provided by Lys192, Asp245, Ser255, Arg256, and Asn257. The Proton acceptor role is filled by Lys192. Arg256 is a binding site for NADPH. Glu282 serves as a coordination point for NADPH.

This sequence belongs to the NAD-dependent glycerol-3-phosphate dehydrogenase family.

It localises to the cytoplasm. The catalysed reaction is sn-glycerol 3-phosphate + NAD(+) = dihydroxyacetone phosphate + NADH + H(+). It catalyses the reaction sn-glycerol 3-phosphate + NADP(+) = dihydroxyacetone phosphate + NADPH + H(+). The protein operates within membrane lipid metabolism; glycerophospholipid metabolism. Catalyzes the reduction of the glycolytic intermediate dihydroxyacetone phosphate (DHAP) to sn-glycerol 3-phosphate (G3P), the key precursor for phospholipid synthesis. The polypeptide is Glycerol-3-phosphate dehydrogenase [NAD(P)+] (Methylococcus capsulatus (strain ATCC 33009 / NCIMB 11132 / Bath)).